The following is a 371-amino-acid chain: Histidinol-phosphate aminotransferase (371 aa).

K228 carries the post-translational modification N6-(pyridoxal phosphate)lysine.

Belongs to the class-II pyridoxal-phosphate-dependent aminotransferase family. Histidinol-phosphate aminotransferase subfamily. It depends on pyridoxal 5'-phosphate as a cofactor.

It carries out the reaction L-histidinol phosphate + 2-oxoglutarate = 3-(imidazol-4-yl)-2-oxopropyl phosphate + L-glutamate. The protein operates within amino-acid biosynthesis; L-histidine biosynthesis; L-histidine from 5-phospho-alpha-D-ribose 1-diphosphate: step 7/9. This Methanococcus maripaludis (strain C6 / ATCC BAA-1332) protein is Histidinol-phosphate aminotransferase.